A 346-amino-acid polypeptide reads, in one-letter code: GTPase Obg (346 aa).

In terms of domain architecture, Obg spans 1–159 (MQFVDEANIR…RNLGLELSVL (159 aa)). Positions 127 to 149 (NVHFKSSTNRTPRQCTPGEPGDE) are disordered. The span at 130-140 (FKSSTNRTPRQ) shows a compositional bias: polar residues. The OBG-type G domain occupies 160–333 (ADVGLLGMPN…LVKEVAYGLE (174 aa)). Residues 166–173 (GMPNAGKS), 191–195 (FTTLY), 213–216 (DIPG), 283–286 (NKTD), and 314–316 (SAV) each bind GTP. Residues serine 173 and threonine 193 each coordinate Mg(2+).

Belongs to the TRAFAC class OBG-HflX-like GTPase superfamily. OBG GTPase family. Monomer. Mg(2+) is required as a cofactor.

It localises to the cytoplasm. Its function is as follows. An essential GTPase which binds GTP, GDP and possibly (p)ppGpp with moderate affinity, with high nucleotide exchange rates and a fairly low GTP hydrolysis rate. Plays a role in control of the cell cycle, stress response, ribosome biogenesis and in those bacteria that undergo differentiation, in morphogenesis control. The polypeptide is GTPase Obg (Hydrogenovibrio crunogenus (strain DSM 25203 / XCL-2) (Thiomicrospira crunogena)).